Here is a 79-residue protein sequence, read N- to C-terminus: Polcalcin Bra r 1 (79 aa).

EF-hand domains lie at 1-36 (MADA…LGSV) and 39-71 (DDVT…NPGL). 10 residues coordinate Ca(2+): aspartate 14, aspartate 16, aspartate 18, lysine 20, glutamate 25, aspartate 49, aspartate 51, aspartate 53, asparagine 55, and glutamate 60.

This Brassica campestris (Field mustard) protein is Polcalcin Bra r 1.